Reading from the N-terminus, the 259-residue chain is Tryptophan synthase alpha chain (259 aa).

Residues E35 and D46 each act as proton acceptor in the active site.

Belongs to the TrpA family. As to quaternary structure, tetramer of two alpha and two beta chains.

It carries out the reaction (1S,2R)-1-C-(indol-3-yl)glycerol 3-phosphate + L-serine = D-glyceraldehyde 3-phosphate + L-tryptophan + H2O. It functions in the pathway amino-acid biosynthesis; L-tryptophan biosynthesis; L-tryptophan from chorismate: step 5/5. The alpha subunit is responsible for the aldol cleavage of indoleglycerol phosphate to indole and glyceraldehyde 3-phosphate. The protein is Tryptophan synthase alpha chain of Methanococcus maripaludis (strain C7 / ATCC BAA-1331).